A 247-amino-acid chain; its full sequence is ATP synthase subunit a, chloroplastic (247 aa).

5 helical membrane passes run 38 to 58 (QVLITSWVVIAILLGSATIAV), 95 to 115 (VPFIGTMFLFIFVSNWSGALL), 134 to 154 (INTTVALALLTSVAYFYAGLT), 199 to 219 (LVVVVLVSLVPLVVPIPVMLL), and 220 to 240 (GLFTSGIQALIFATLAAAYIG).

Belongs to the ATPase A chain family. As to quaternary structure, F-type ATPases have 2 components, CF(1) - the catalytic core - and CF(0) - the membrane proton channel. CF(1) has five subunits: alpha(3), beta(3), gamma(1), delta(1), epsilon(1). CF(0) has four main subunits: a, b, b' and c.

It is found in the plastid. It localises to the chloroplast thylakoid membrane. Functionally, key component of the proton channel; it plays a direct role in the translocation of protons across the membrane. This chain is ATP synthase subunit a, chloroplastic, found in Nicotiana sylvestris (Wood tobacco).